Consider the following 295-residue polypeptide: RNA polymerase sigma-C factor (295 aa).

Residues 73-86 (DLIQEANIGLMKAV) carry the Polymerase core binding motif. The segment at residues 250 to 269 (LSELGEHFGFSRERARQLEI) is a DNA-binding region (H-T-H motif).

It belongs to the sigma-70 factor family.

Its function is as follows. Sigma factors are initiation factors that promote the attachment of RNA polymerase to specific initiation sites and are then released. This sigma factor is essential for normal fruiting body formation. This is RNA polymerase sigma-C factor (sigC) from Myxococcus xanthus.